Consider the following 941-residue polypeptide: Isoleucine--tRNA ligase (941 aa).

Positions 58 to 68 (PYANGDIHIGH) match the 'HIGH' region motif. Glu-562 contacts L-isoleucyl-5'-AMP. A 'KMSKS' region motif is present at residues 603–607 (KMSKS). Position 606 (Lys-606) interacts with ATP. 4 residues coordinate Zn(2+): Cys-904, Cys-907, Cys-924, and Cys-927.

This sequence belongs to the class-I aminoacyl-tRNA synthetase family. IleS type 1 subfamily. In terms of assembly, monomer. It depends on Zn(2+) as a cofactor.

It localises to the cytoplasm. It carries out the reaction tRNA(Ile) + L-isoleucine + ATP = L-isoleucyl-tRNA(Ile) + AMP + diphosphate. Functionally, catalyzes the attachment of isoleucine to tRNA(Ile). As IleRS can inadvertently accommodate and process structurally similar amino acids such as valine, to avoid such errors it has two additional distinct tRNA(Ile)-dependent editing activities. One activity is designated as 'pretransfer' editing and involves the hydrolysis of activated Val-AMP. The other activity is designated 'posttransfer' editing and involves deacylation of mischarged Val-tRNA(Ile). The polypeptide is Isoleucine--tRNA ligase (Alkalilimnicola ehrlichii (strain ATCC BAA-1101 / DSM 17681 / MLHE-1)).